Reading from the N-terminus, the 33-residue chain is Beta-amanitin proprotein (33 aa).

The propeptide occupies 1–10 (MSDINATRLP). Positions 11-18 (IWGIGCDP) form a cross-link, cyclopeptide (Ile-Pro). Residues 12–16 (WGIGC) constitute a cross-link (2'-cysteinyl-6'-hydroxytryptophan sulfoxide (Trp-Cys)). The propeptide occupies 19–33 (CVGDEVTALLTRGEA).

This sequence belongs to the MSDIN fungal toxin family. In terms of processing, processed by the macrocyclase-peptidase enzyme POPB to yield a toxic cyclic decapeptide. POPB first removes 10 residues from the N-terminus. Conformational trapping of the remaining peptide forces the enzyme to release this intermediate rather than proceed to macrocyclization. The enzyme rebinds the remaining peptide in a different conformation and catalyzes macrocyclization of the N-terminal 8 residues.

Functionally, toxin belonging to the bicyclic octapeptides amatoxins that acts by binding non-competitively to RNA polymerase II and greatly slowing the elongation of transcripts from target promoters. This Amanita fuligineoides protein is Beta-amanitin proprotein.